The following is an 833-amino-acid chain: Zinc transporter ZIP10 (833 aa).

The signal sequence occupies residues M1–C25. Over residues D30–S48 the composition is skewed to basic and acidic residues. 2 disordered regions span residues D30 to Q54 and A137 to D167. A compositionally biased stretch (polar residues) spans A137–S147. Positions K152–D167 are enriched in basic and acidic residues. N191 and N198 each carry an N-linked (GlcNAc...) asparagine glycan. Residues S200–P209 are compositionally biased toward basic and acidic residues. Disordered stretches follow at residues S200–H257 and R271–R335. An N-linked (GlcNAc...) asparagine glycan is attached at N218. A compositionally biased stretch (basic residues) spans V229–K241. Basic and acidic residues-rich tracts occupy residues H281 to H315 and S326 to R335. N341 carries N-linked (GlcNAc...) asparagine glycosylation. Helical transmembrane passes span I413–I433 and F440–H460. The tract at residues Q466–H485 is disordered. Residues V497 to I517 form a helical membrane-spanning segment. T538 and T555 each carry phosphothreonine. Position 593 is a phosphoserine (S593). 4 helical membrane-spanning segments follow: residues A689–F709, I734–V754, I761–M781, and F803–Y823.

The protein belongs to the ZIP transporter (TC 2.A.5) family. Interacts with SLC39A6. This interaction triggers cells to undergo EMT and mitosis. Found in a complex with SLC39A6, SLC39A10 and with the 'Ser-727' phosphorylated form of STAT3 throughout mitosis. Found in a complex with SLC39A6, SLC39A10 and with NCAM1; this complex controls NCAM1 phosphorylation and integration into focal adhesion complexes during epithelial-tomesenchymal transition. Found in a complex with SLC39A6, SLC39A10 and with GSK3B that controls NCAM1 phosphorylation. Post-translationally, undergoes N-terminal ectodomain shedding. Expressed in the liver, kidney and brain.

The protein localises to the cell membrane. Its subcellular location is the apical cell membrane. The catalysed reaction is Zn(2+)(in) = Zn(2+)(out). Functionally, zinc-influx transporter. When associated with SLC39A6, the heterodimer formed by SLC39A10 and SLC39A6 mediates cellular zinc uptake to trigger cells to undergo epithelial-to-mesenchymal transition (EMT). mediates cellular zinc uptake to trigger cells to undergo epithelial-to-mesenchymal transition (EMT). SLC39A10-SLC39A6 heterodimers play also an essentiel role in initiating mitosis by importing zinc into cells to initiate a pathway resulting in the onset of mitosis. Plays an important for both mature B-cell maintenance and humoral immune responses. When associated with SLC39A10, the heterodimer controls NCAM1 phosphorylation and integration into focal adhesion complexes during EMT. The polypeptide is Zinc transporter ZIP10 (Mus musculus (Mouse)).